Consider the following 294-residue polypeptide: 4-hydroxy-tetrahydrodipicolinate synthase (294 aa).

Residue threonine 44 coordinates pyruvate. The active-site Proton donor/acceptor is the tyrosine 132. Lysine 161 serves as the catalytic Schiff-base intermediate with substrate. Isoleucine 203 is a pyruvate binding site.

Belongs to the DapA family. Homotetramer; dimer of dimers.

The protein localises to the cytoplasm. It carries out the reaction L-aspartate 4-semialdehyde + pyruvate = (2S,4S)-4-hydroxy-2,3,4,5-tetrahydrodipicolinate + H2O + H(+). The protein operates within amino-acid biosynthesis; L-lysine biosynthesis via DAP pathway; (S)-tetrahydrodipicolinate from L-aspartate: step 3/4. Its function is as follows. Catalyzes the condensation of (S)-aspartate-beta-semialdehyde [(S)-ASA] and pyruvate to 4-hydroxy-tetrahydrodipicolinate (HTPA). The protein is 4-hydroxy-tetrahydrodipicolinate synthase of Aquifex aeolicus (strain VF5).